Here is a 218-residue protein sequence, read N- to C-terminus: Elongation factor Ts (218 aa).

The interval 82 to 85 (TDFV) is involved in Mg(2+) ion dislocation from EF-Tu.

This sequence belongs to the EF-Ts family.

The protein resides in the cytoplasm. In terms of biological role, associates with the EF-Tu.GDP complex and induces the exchange of GDP to GTP. It remains bound to the aminoacyl-tRNA.EF-Tu.GTP complex up to the GTP hydrolysis stage on the ribosome. The chain is Elongation factor Ts from Prochlorococcus marinus (strain MIT 9312).